Here is a 414-residue protein sequence, read N- to C-terminus: Serine/threonine transporter SstT (414 aa).

A run of 8 helical transmembrane segments spans residues 22–42 (GLVLGIVVALISAPLQETIGF), 54–74 (IFVKALRAVAPILIFFLVMAA), 89–109 (IIVLYLLGTFLAAFVAVIAGF), 148–168 (AIFKANFIGVLAWSIGLGLAL), 189–209 (IVHVIISFAPFGVFGLVAETL), 223–243 (LLAVLIGTMLFTAFVVNPILV), 305–325 (MAGAAITITILTLAAVHTLGL), and 337–357 (IVAALCACGASGVAGGSLLLI).

It belongs to the dicarboxylate/amino acid:cation symporter (DAACS) (TC 2.A.23) family.

It localises to the cell inner membrane. The enzyme catalyses L-serine(in) + Na(+)(in) = L-serine(out) + Na(+)(out). The catalysed reaction is L-threonine(in) + Na(+)(in) = L-threonine(out) + Na(+)(out). Its function is as follows. Involved in the import of serine and threonine into the cell, with the concomitant import of sodium (symport system). The polypeptide is Serine/threonine transporter SstT (Haemophilus influenzae (strain 86-028NP)).